We begin with the raw amino-acid sequence, 550 residues long: Methyl-accepting chemotaxis protein PcaY (550 aa).

The Cytoplasmic portion of the chain corresponds to 1–19 (MVPTRSTARMLANLKIRTG). A helical transmembrane segment spans residues 20-40 (MFWVLSLFSLTLLFSTASAWW). The Periplasmic portion of the chain corresponds to 41 to 198 (AALGSDQQIT…ESDRRLARAQ (158 aa)). The segment at 44-196 (GSDQQITELD…MLESDRRLAR (153 aa)) is ligand-binding domain. Positions 71 and 75 each coordinate benzoate. R71, N75, and Y135 together coordinate salicylate. 71-78 (RSSANVSS) serves as a coordination point for 3,4-dihydroxybenzoate. Residues 71–78 (RSSANVSS), Y135, Q142, and N158 each bind L-quinate. Residue Q169 participates in 3,4-dihydroxybenzoate binding. Residues 199–219 (LLSLCLLGVTVVLAVLCWAFI) form a helical membrane-spanning segment. The Cytoplasmic segment spans residues 220–550 (AQRVLHPLRE…MTALVGRFKV (331 aa)). The HAMP domain occupies 221-273 (QRVLHPLREAGGHFRRIASGDLSVPVQGQGNNEIGQLFHELQRMQQSQRDTLG). The Methyl-accepting transducer domain occupies 278-514 (CARQLDAAAT…EVDRNLLNIR (237 aa)).

Belongs to the methyl-accepting chemotaxis (MCP) protein family. Ligand free PcaY_PP-ligand-binding domain (LBD) is present in a monomer-dimer equilibrium. Only the dimeric LBD is able to bind ligands which in turn causes dimer stabilization.

The protein resides in the cell inner membrane. In terms of biological role, chemotactic-signal transducers respond to changes in the concentration of attractants and repellents in the environment, transduce a signal from the outside to the inside of the cell, and facilitate sensory adaptation through the variation of the level of methylation. PcaY recognizes a wide range of compounds containing a C6-membered ring with a carboxylate group. Binds preferentially compounds that serve as carbon sources and among them those that rapidly promote growth. Tightest binding compounds are quinate, shikimate, 3-dehydroshikimate and protocatechuate, which are at the interception of the biosynthetic shikimate and catabolic quinate pathways. This is Methyl-accepting chemotaxis protein PcaY from Pseudomonas putida (strain ATCC 47054 / DSM 6125 / CFBP 8728 / NCIMB 11950 / KT2440).